We begin with the raw amino-acid sequence, 138 residues long: DNA-directed RNA polymerase II subunit 4 (138 aa).

An N-acetylserine modification is found at Ser2.

It belongs to the eukaryotic RPB4 RNA polymerase subunit family. Component of the RNA polymerase II complex consisting of at least 12 subunits. Interacts with NRPB7.

The protein resides in the nucleus. DNA-dependent RNA polymerase catalyzes the transcription of DNA into RNA using the four ribonucleoside triphosphates as substrates. Second largest component of RNA polymerase II which synthesizes mRNA precursors and many functional non-coding RNAs. Proposed to contribute to the polymerase catalytic activity and forms the polymerase active center together with the largest subunit. Pol II is the central component of the basal RNA polymerase II transcription machinery. It is composed of mobile elements that move relative to each other. The chain is DNA-directed RNA polymerase II subunit 4 (NRPB4) from Arabidopsis thaliana (Mouse-ear cress).